Here is a 398-residue protein sequence, read N- to C-terminus: Riboflavin biosynthesis protein RibBA (398 aa).

The interval 1–199 (MFHPIEEALD…IKDLIQYRYN (199 aa)) is DHBP synthase. Residues 26–27 (RE), D31, 138–142 (RAGHT), and E162 contribute to the D-ribulose 5-phosphate site. E27 contributes to the Mg(2+) binding site. H141 serves as a coordination point for Mg(2+). Positions 200–398 (LTTLVEREVD…MNKLGHLLHF (199 aa)) are GTP cyclohydrolase II. GTP is bound at residue 251–255 (RVHSE). Zn(2+) is bound by residues C256, C267, and C269. Residues Q272, 294–296 (EGR), and T316 contribute to the GTP site. D328 serves as the catalytic Proton acceptor; for GTP cyclohydrolase activity. The Nucleophile; for GTP cyclohydrolase activity role is filled by R330. 2 residues coordinate GTP: T351 and K356.

It in the N-terminal section; belongs to the DHBP synthase family. This sequence in the C-terminal section; belongs to the GTP cyclohydrolase II family. Requires Mg(2+) as cofactor. It depends on Mn(2+) as a cofactor. Zn(2+) serves as cofactor.

It carries out the reaction D-ribulose 5-phosphate = (2S)-2-hydroxy-3-oxobutyl phosphate + formate + H(+). It catalyses the reaction GTP + 4 H2O = 2,5-diamino-6-hydroxy-4-(5-phosphoribosylamino)-pyrimidine + formate + 2 phosphate + 3 H(+). The protein operates within cofactor biosynthesis; riboflavin biosynthesis; 2-hydroxy-3-oxobutyl phosphate from D-ribulose 5-phosphate: step 1/1. It participates in cofactor biosynthesis; riboflavin biosynthesis; 5-amino-6-(D-ribitylamino)uracil from GTP: step 1/4. Catalyzes the conversion of D-ribulose 5-phosphate to formate and 3,4-dihydroxy-2-butanone 4-phosphate. In terms of biological role, catalyzes the conversion of GTP to 2,5-diamino-6-ribosylamino-4(3H)-pyrimidinone 5'-phosphate (DARP), formate and pyrophosphate. In Bacillus subtilis (strain 168), this protein is Riboflavin biosynthesis protein RibBA.